The following is a 183-amino-acid chain: Acidic proline-rich protein HP43A (183 aa).

Residues 1–14 (MLVVLLTAALLAEH) form the signal peptide. Residues 22-183 (ISQLSEEEQQ…QGSEEQSTSL (162 aa)) are disordered. Positions 52-65 (SDEEGDDDGEEDGN) are enriched in acidic residues. Repeat copies occupy residues 81 to 100 (RPPK…QQQN), 101 to 120 (RPPK…QQQN), 121 to 140 (RPPK…QQQN), 141 to 160 (RPPK…QQQN), and 161 to 180 (RPPK…EEQS). The segment covering 86 to 183 (GNQQGPPQQE…QGSEEQSTSL (98 aa)) has biased composition (low complexity).

Its subcellular location is the secreted. In Mesocricetus auratus (Golden hamster), this protein is Acidic proline-rich protein HP43A (H29).